The following is a 117-amino-acid chain: MSKQPRKQRKALYTAPLHKRHNSMSVHLSDDLKEEFNRRSFPVRKGDSVEIVRGDFRGTEGKVEGVDLKNYRVLVDGASSQKQDGSKLYQPIHPSNLVLTEIYLDDERRNQALNRKV.

Residues 1-10 (MSKQPRKQRK) show a composition bias toward basic residues. Residues 1-28 (MSKQPRKQRKALYTAPLHKRHNSMSVHL) form a disordered region.

The protein belongs to the universal ribosomal protein uL24 family. As to quaternary structure, part of the 50S ribosomal subunit.

One of two assembly initiator proteins, it binds directly to the 5'-end of the 23S rRNA, where it nucleates assembly of the 50S subunit. Its function is as follows. Located at the polypeptide exit tunnel on the outside of the subunit. This chain is Large ribosomal subunit protein uL24, found in Methanosphaera stadtmanae (strain ATCC 43021 / DSM 3091 / JCM 11832 / MCB-3).